The following is a 384-amino-acid chain: 2-deoxy-scyllo-inosose synthase (384 aa).

NAD(+)-binding positions include D42, 73 to 76 (EVHK), 105 to 109 (GITGN), 129 to 130 (TT), 140 to 142 (SLK), and 151 to 152 (KN). K142 is an active-site residue. Residue E184 participates in Co(2+) binding. E244 is a catalytic residue. The Co(2+) site is built by H247 and H263.

It belongs to the sugar phosphate cyclases superfamily. DOI synthase family. The cofactor is NAD(+). Requires Co(2+) as cofactor.

The enzyme catalyses D-glucose 6-phosphate = 2-deoxy-L-scyllo-inosose + phosphate. It participates in metabolic intermediate biosynthesis; 2-deoxystreptamine biosynthesis; 2-deoxystreptamine from D-glucose 6-phosphate: step 1/4. The protein operates within antibiotic biosynthesis; lividomycin biosynthesis. Functionally, catalyzes the intramolecular carbocycle formation from D-glucose-6-phosphate to 2-deoxy-scyllo-inosose (DOI). This Streptomyces lividus protein is 2-deoxy-scyllo-inosose synthase (livC).